We begin with the raw amino-acid sequence, 173 residues long: MDIAIQHPWFKRALGPFYPSRLFDQFFGEGLFEYDLLPFLSSTISPYYRQSLFRTVLDSGISEVRSDRDKFVIFLDVKHFSPEDLTVKVQEDFVEIHGKHNERQDDHGYISREFHRRYRLPSNVDQSALSCSLSADGMLTFSGPKVPSGMDAGHSERAIPVSREEKPSSAPSS.

M1 is modified (N-acetylmethionine). A required for complex formation with BFSP1 and BFSP2 region spans residues M1 to E63. The residue at position 6 (Q6) is a Deamidated glutamine; partial. S45 carries the phosphoserine modification. Q50 carries the deamidated glutamine; partial modification. A sHSP domain is found at L52–S162. K70 carries the N6-acetyllysine modification. Residue Q90 is modified to Deamidated glutamine; partial. An N6-acetyllysine modification is found at K99. A Zn(2+)-binding site is contributed by H100. Deamidated asparagine; partial is present on N101. 2 residues coordinate Zn(2+): E102 and H107. The residue at position 122 (S122) is a Phosphoserine. N123 carries the deamidated asparagine; partial modification. The disordered stretch occupies residues P144–S173. Over residues G153–P167 the composition is skewed to basic and acidic residues. H154 is a binding site for Zn(2+). A glycan (O-linked (GlcNAc) serine) is linked at S162.

The protein belongs to the small heat shock protein (HSP20) family. Heteromer composed of three CRYAA and one CRYAB subunits. Inter-subunit bridging via zinc ions enhances stability, which is crucial as there is no protein turn over in the lens. Can also form homodimers and homotetramers (dimers of dimers) which serve as the building blocks of homooligomers. Within homooligomers, the zinc-binding motif is created from residues of 3 different molecules. His-100 and Glu-102 from one molecule are ligands of the zinc ion, and His-107 and His-154 residues from additional molecules complete the site with tetrahedral coordination geometry. Part of a complex required for lens intermediate filament formation composed of BFSP1, BFSP2 and CRYAA. Acetylation at Lys-70 may increase chaperone activity. Post-translationally, undergoes age-dependent proteolytical cleavage at the C-terminus.

The protein resides in the cytoplasm. It is found in the nucleus. In terms of biological role, contributes to the transparency and refractive index of the lens. Acts as a chaperone, preventing aggregation of various proteins under a wide range of stress conditions. Required for the correct formation of lens intermediate filaments as part of a complex composed of BFSP1, BFSP2 and CRYAA. This Balaenoptera acutorostrata (Common minke whale) protein is Alpha-crystallin A chain (CRYAA).